The primary structure comprises 2271 residues: Serine-rich adhesin for platelets (2271 aa).

Residues 1 to 89 (MSKRQKAFHD…VNMLHDQQAF (89 aa)) form the signal peptide. A serine-rich repeat region 1, SRR1 region spans residues 90–230 (AASDAPLTSE…KTSTTSTSTA (141 aa)). A compositionally biased stretch (polar residues) spans 100–111 (LNTQSETVGNQN). Disordered regions lie at residues 100–229 (LNTQ…STST), 751–791 (NSMS…VVST), and 806–2243 (SVSA…GLLG). The span at 112–128 (STTIEASTSTADSTSVT) shows a compositional bias: low complexity. The span at 129–140 (KNSSSVQTSNSD) shows a compositional bias: polar residues. Residues 150 to 229 (VTSTTNSTSN…NKTSTTSTST (80 aa)) show a composition bias toward low complexity. The interval 231–751 (PVKLRTFSRL…TTFKYEVTRN (521 aa)) is non-repeat region (NRR). Low complexity-rich tracts occupy residues 752-791 (SMSD…VVST), 806-1392 (SVSA…LSLS), and 1402-2214 (SNSA…ATSE). Positions 752–2232 (SMSDSVSTSG…AQSEKRLPDT (1481 aa)) are serine-rich repeat region 2, SRR2. The LPXTG sorting signal signature appears at 2229-2233 (LPDTG). Threonine 2232 is subject to Pentaglycyl murein peptidoglycan amidated threonine. A propeptide spans 2233 to 2271 (GDSIKQNGLLGGVMTLLVGLGLMKRKKKKDENDQDDSQA) (removed by sortase).

This sequence belongs to the serine-rich repeat protein (SRRP) family. Post-translationally, proteolytically cleaved by a metalloprotease. Glycosylated. It is probable that most of the Ser residues in SSR1 and SSR2 are O-GlcNAcylated. Sequential glycosylation by sugar transferases are able to generate complex sugar polymorphisms.

Its subcellular location is the secreted. The protein resides in the cell wall. Its function is as follows. Mediates binding to human platelets, possibly through a receptor-ligand interaction. Probably associated with virulence in endovascular infection. This Staphylococcus aureus (strain Mu50 / ATCC 700699) protein is Serine-rich adhesin for platelets (sraP).